We begin with the raw amino-acid sequence, 332 residues long: Alanine racemase (332 aa).

Catalysis depends on Lys-33, which acts as the Proton acceptor; specific for D-alanine. Lys-33 bears the N6-(pyridoxal phosphate)lysine mark. Arg-115 serves as a coordination point for substrate. Tyr-245 serves as the catalytic Proton acceptor; specific for L-alanine. Met-286 lines the substrate pocket.

The protein belongs to the alanine racemase family. The cofactor is pyridoxal 5'-phosphate.

It catalyses the reaction L-alanine = D-alanine. It participates in amino-acid biosynthesis; D-alanine biosynthesis; D-alanine from L-alanine: step 1/1. In terms of biological role, catalyzes the interconversion of L-alanine and D-alanine. May also act on other amino acids. The protein is Alanine racemase (alr) of Nitratiruptor sp. (strain SB155-2).